The following is a 254-amino-acid chain: Coenzyme F420:L-glutamate ligase (254 aa).

Residues 11-14 (IPLI), 40-41 (ST), and Lys45 each bind GTP. A divalent metal cation is bound at residue Asp109. Asn112 is a binding site for GTP. A divalent metal cation-binding residues include Asp150, Thr151, and Glu208. Residue 206–213 (MGEGAGGI) coordinates GTP.

This sequence belongs to the CofE family. Homodimer. It depends on Mg(2+) as a cofactor. Requires Mn(2+) as cofactor. K(+) is required as a cofactor.

It catalyses the reaction oxidized coenzyme F420-0 + GTP + L-glutamate = oxidized coenzyme F420-1 + GDP + phosphate + H(+). It carries out the reaction oxidized coenzyme F420-1 + GTP + L-glutamate = oxidized coenzyme F420-2 + GDP + phosphate + H(+). Its pathway is cofactor biosynthesis; coenzyme F420 biosynthesis. Its function is as follows. Catalyzes the GTP-dependent successive addition of two or more gamma-linked L-glutamates to the L-lactyl phosphodiester of 7,8-didemethyl-8-hydroxy-5-deazariboflavin (F420-0) to form coenzyme F420-0-glutamyl-glutamate (F420-2) or polyglutamated F420 derivatives. The sequence is that of Coenzyme F420:L-glutamate ligase from Methanosarcina acetivorans (strain ATCC 35395 / DSM 2834 / JCM 12185 / C2A).